The sequence spans 245 residues: CTD nuclear envelope phosphatase 1B (245 aa).

The helical transmembrane segment at 7–29 (CLLGVRTFHGVTSRIWSFFLYIL) threads the bilayer. An FCP1 homology domain is found at 58–225 (NNVKRKILVL…LNLLPMLDAL (168 aa)).

It belongs to the dullard family.

It localises to the endoplasmic reticulum membrane. The protein localises to the nucleus membrane. The enzyme catalyses O-phospho-L-seryl-[protein] + H2O = L-seryl-[protein] + phosphate. The catalysed reaction is O-phospho-L-threonyl-[protein] + H2O = L-threonyl-[protein] + phosphate. Functionally, serine/threonine protein phosphatase that may dephosphorylate and activate lipins. Lipins are phosphatidate phosphatases that catalyze the conversion of phosphatidic acid to diacylglycerol and control the metabolism of fatty acids at different levels. May indirectly modulate the lipid composition of nuclear and/or endoplasmic reticulum membranes and be required for proper nuclear membrane morphology and/or dynamics. May also indirectly regulate the production of lipid droplets and triacylglycerol. May antagonize BMP signaling. This Danio rerio (Zebrafish) protein is CTD nuclear envelope phosphatase 1B (ctdnep1b).